A 65-amino-acid polypeptide reads, in one-letter code: Large ribosomal subunit protein bL33m (65 aa).

The N-terminal 8 residues, 1-8, are a transit peptide targeting the mitochondrion; that stretch reads MFLSAVTF.

Belongs to the bacterial ribosomal protein bL33 family. In terms of assembly, component of the mitochondrial ribosome large subunit (39S) which comprises a 16S rRNA and about 50 distinct proteins.

The protein localises to the mitochondrion. This Bos taurus (Bovine) protein is Large ribosomal subunit protein bL33m (MRPL33).